We begin with the raw amino-acid sequence, 163 residues long: MDALEEESFALSFSSASDAEFDAVVGCLEDIIMDAEFQLLQRSFMDKYYQEFEDTEENKLTYTPIFNEYISLVEKYIEEQLLERIPGFNMAAFTTTLQHHKDEVAGDIFDMLLTFTDFLAFKEMFLDYRAEKEGRGLDLSSGLVVTSLCKSSSTPASQNNLRH.

The protein belongs to the ARL2BP family. In terms of assembly, interacts with GTP bound ARL2 and ARL3; the complex ARL2-ARL2BP as well as ARL2BP alone, binds to SLC25A4/ANT1. Interaction with ARL2 may be required for cilia basal body localization. Interacts with STAT3; interaction is enhanced with ARL2. Found in a complex with ARL2BP, ARL2 and SLC25A6. Found in a complex with ARL2, ARL2BP and SLC25A4. Interacts with STAT2, STAT3 and STAT4. As to expression, ubiquitous with higher expression in brain, especially in hippocampus and cortex. Also expressed in lung, cerebellum, liver, kidney, spleen and heart (at protein level).

The protein resides in the cytoplasm. It localises to the mitochondrion intermembrane space. It is found in the cytoskeleton. The protein localises to the microtubule organizing center. Its subcellular location is the centrosome. The protein resides in the nucleus. It localises to the spindle. It is found in the cilium basal body. Functionally, together with ARL2, plays a role in the nuclear translocation, retention and transcriptional activity of STAT3. May play a role as an effector of ARL2. The protein is ADP-ribosylation factor-like protein 2-binding protein (Arl2bp) of Rattus norvegicus (Rat).